The primary structure comprises 544 residues: CTP synthase (544 aa).

The interval 1–265 (MTKFIFVTGG…DNIITEQLQL (265 aa)) is amidoligase domain. Residue Ser13 participates in CTP binding. Ser13 contacts UTP. Residues 14–19 (SLGKGI) and Asp71 contribute to the ATP site. Asp71 and Glu139 together coordinate Mg(2+). Residues 146–148 (DIE), 186–191 (KTKPTQ), and Lys222 contribute to the CTP site. Residues 186–191 (KTKPTQ) and Lys222 each bind UTP. Positions 290–544 (KIAMVGKYVD…VKAALNNKKA (255 aa)) constitute a Glutamine amidotransferase type-1 domain. Gly353 is an L-glutamine binding site. Cys380 acts as the Nucleophile; for glutamine hydrolysis in catalysis. Residues 381 to 384 (LGMQ), Glu404, and Arg471 contribute to the L-glutamine site. Catalysis depends on residues His517 and Glu519.

This sequence belongs to the CTP synthase family. In terms of assembly, homotetramer.

The enzyme catalyses UTP + L-glutamine + ATP + H2O = CTP + L-glutamate + ADP + phosphate + 2 H(+). The catalysed reaction is L-glutamine + H2O = L-glutamate + NH4(+). It catalyses the reaction UTP + NH4(+) + ATP = CTP + ADP + phosphate + 2 H(+). It functions in the pathway pyrimidine metabolism; CTP biosynthesis via de novo pathway; CTP from UDP: step 2/2. Its activity is regulated as follows. Allosterically activated by GTP, when glutamine is the substrate; GTP has no effect on the reaction when ammonia is the substrate. The allosteric effector GTP functions by stabilizing the protein conformation that binds the tetrahedral intermediate(s) formed during glutamine hydrolysis. Inhibited by the product CTP, via allosteric rather than competitive inhibition. Catalyzes the ATP-dependent amination of UTP to CTP with either L-glutamine or ammonia as the source of nitrogen. Regulates intracellular CTP levels through interactions with the four ribonucleotide triphosphates. The sequence is that of CTP synthase from Neisseria meningitidis serogroup C / serotype 2a (strain ATCC 700532 / DSM 15464 / FAM18).